A 60-amino-acid polypeptide reads, in one-letter code: Large ribosomal subunit protein uL30 (60 aa).

This sequence belongs to the universal ribosomal protein uL30 family. In terms of assembly, part of the 50S ribosomal subunit.

This chain is Large ribosomal subunit protein uL30, found in Desulfotalea psychrophila (strain LSv54 / DSM 12343).